The sequence spans 105 residues: Heat shock protein HspQ (105 aa).

Residues 75-105 (GEAQEAHPEQPSLDELAESIRHQLQAPRLRN) are disordered.

It belongs to the HspQ family.

It is found in the cytoplasm. Functionally, involved in the degradation of certain denaturated proteins, including DnaA, during heat shock stress. The polypeptide is Heat shock protein HspQ (Serratia proteamaculans (strain 568)).